The chain runs to 256 residues: Small ribosomal subunit protein eS1A (256 aa).

An N-acetylalanine; partial modification is found at Ala2.

The protein belongs to the eukaryotic ribosomal protein eS1 family. As to quaternary structure, component of the small ribosomal subunit. Mature ribosomes consist of a small (40S) and a large (60S) subunit. The 40S subunit contains about 33 different proteins and 1 molecule of RNA (18S). The 60S subunit contains about 49 different proteins and 3 molecules of RNA (25S, 5.8S and 5S).

It localises to the cytoplasm. This Debaryomyces hansenii (strain ATCC 36239 / CBS 767 / BCRC 21394 / JCM 1990 / NBRC 0083 / IGC 2968) (Yeast) protein is Small ribosomal subunit protein eS1A.